We begin with the raw amino-acid sequence, 275 residues long: Putative methylglyoxal reductase DkgA (275 aa).

Tyr-51 (proton donor) is an active-site residue. His-107 is a substrate binding site. Residue 187–241 (SPLAQGGEGVFDQKVIRELADKYGKTPAQIVIRWHLDCGLVVIPKSVTPSRIAEN) coordinates NADP(+).

It belongs to the aldo/keto reductase family. In terms of assembly, monomer.

The protein resides in the cytoplasm. The catalysed reaction is hydroxyacetone + NADP(+) = methylglyoxal + NADPH + H(+). Aldo-keto reductase that significantly contributes to cellular methylglyoxal detoxification by catalyzing the NADPH-dependent conversion of methylglyoxal to acetol. This Salmonella typhi protein is Putative methylglyoxal reductase DkgA.